Here is a 1093-residue protein sequence, read N- to C-terminus: Leucine-rich repeats and immunoglobulin-like domains protein 1 (1093 aa).

An N-terminal signal peptide occupies residues 1–34 (MARPVRGGLGAPRRSPCLLLLWLLLLRLEPVTAA). In terms of domain architecture, LRRNT spans 35–68 (AGPRAPCAAACTCAGDSLDCGGRGLAALPGDLPS). Residues 35 to 794 (AGPRAPCAAA…GCRKDGTTVG (760 aa)) are Extracellular-facing. The cysteines at positions 45 and 54 are disulfide-linked. LRR repeat units follow at residues 69-90 (WTRSLNLSYNKLSEIDPAGFED), 93-114 (NLQEVYLNNNELTAVPSLGAAS), 116-137 (HVVSLFLQHNKIRSVEGSQLKA), 140-161 (SLEVLDLSLNNITEVRNTCFPH), 164-185 (PIKELNLAGNRIGTLELGAFDG), 189-210 (SLLTLRLSKNRITQLPVRAFKL), 212-233 (RLTQLDLNRNRIRLIEGLTFQG), 236-257 (SLEVLKLQRNNISKLTDGAFWG), 260-281 (KMHVLHLEYNSLVEVNSGSLYG), 284-305 (ALHQLHLSNNSIARIHRKGWSF), 308-329 (KLHELVLSFNNLTRLDEESLAE), 332-353 (SLSVLRLSHNSISHIAEGAFKG), 356-378 (SLRVLDLDHNEISGTIEDTSGAF), 383-404 (SLSKLTLFGNKIKSVAKRAFSG), and 407-428 (GLEHLNLGGNAIRSVQFDAFVK). Residue Asn74 is glycosylated (N-linked (GlcNAc...) asparagine). A glycan (N-linked (GlcNAc...) asparagine) is linked at Asn150. Asn246 carries N-linked (GlcNAc...) asparagine glycosylation. N-linked (GlcNAc...) asparagine glycans are attached at residues Asn292 and Asn318. Positions 440–491 (DSFLCDCQLKWLPPWLIGRMLQAFVTATCAHPESLKGQSIFSVPPESFVCDD) constitute an LRRCT domain. Intrachain disulfides connect Cys444/Cys468, Cys446/Cys489, Cys516/Cys577, and Cys620/Cys672. Ig-like C2-type domains are found at residues 495–594 (PQII…ARLT), 599–688 (PSFT…ATLT), and 693–779 (PSLV…SQLS). Asn684 carries an N-linked (GlcNAc...) asparagine glycan. A disulfide bridge connects residues Cys714 and Cys763. A helical transmembrane segment spans residues 795–815 (IFTIAVVSSIVLTSLVWVCII). At 816 to 1093 (YQTRKKSEEY…RVPLLLAPKS (278 aa)) the chain is on the cytoplasmic side. 2 disordered regions span residues 946–983 (AFHPQPVSRDSAQPSAPNGPEPGGSDQEHSPHHQCSRT) and 1063–1093 (PKACDASPESTPLTGQLPGKQRVPLLLAPKS).

In terms of assembly, interacts (via extracellular LRR and Ig-like domains) with EGFR/ERBB1, ERBB2, ERBB3 and ERBB4 (via extracellular domain). The physiological relevance of the interaction is controversial; LRIG1 may have low affinity for EGFR, and interaction may occur only when high levels of both proteins are present. As to expression, widely expressed.

Its subcellular location is the cell membrane. Acts as a feedback negative regulator of signaling by receptor tyrosine kinases, through a mechanism that involves enhancement of receptor ubiquitination and accelerated intracellular degradation. This Homo sapiens (Human) protein is Leucine-rich repeats and immunoglobulin-like domains protein 1.